The chain runs to 204 residues: Thymidylate kinase (204 aa).

An ATP-binding site is contributed by 11 to 18 (GLDKSGKT).

The protein belongs to the thymidylate kinase family.

It catalyses the reaction dTMP + ATP = dTDP + ADP. Its pathway is pyrimidine metabolism; dTTP biosynthesis. This Ectromelia virus (strain Moscow) (ECTV) protein is Thymidylate kinase (TMK).